The chain runs to 158 residues: MNKKKDDCGGLSLPSDSVFCSLHANDSIWQHDKKVLRGGKASRDGLEAERIAAQALEADGWQILGRRLRTSAGEIDILAEMDGLLAIVEVKYRPTLSEAAHALGPRQRKRLIAAASYVLAQHPEYGTEGVRFDVIVVDMAGQVRRITDAFRLDEEGWP.

The protein belongs to the UPF0102 family.

The chain is UPF0102 protein GbCGDNIH1_0975 from Granulibacter bethesdensis (strain ATCC BAA-1260 / CGDNIH1).